Consider the following 250-residue polypeptide: 3-deoxy-manno-octulosonate cytidylyltransferase (250 aa).

The protein belongs to the KdsB family.

The protein resides in the cytoplasm. The enzyme catalyses 3-deoxy-alpha-D-manno-oct-2-ulosonate + CTP = CMP-3-deoxy-beta-D-manno-octulosonate + diphosphate. It participates in nucleotide-sugar biosynthesis; CMP-3-deoxy-D-manno-octulosonate biosynthesis; CMP-3-deoxy-D-manno-octulosonate from 3-deoxy-D-manno-octulosonate and CTP: step 1/1. It functions in the pathway bacterial outer membrane biogenesis; lipopolysaccharide biosynthesis. Functionally, activates KDO (a required 8-carbon sugar) for incorporation into bacterial lipopolysaccharide in Gram-negative bacteria. This Geobacter sulfurreducens (strain ATCC 51573 / DSM 12127 / PCA) protein is 3-deoxy-manno-octulosonate cytidylyltransferase.